We begin with the raw amino-acid sequence, 315 residues long: Methionyl-tRNA formyltransferase (315 aa).

(6S)-5,6,7,8-tetrahydrofolate is bound at residue 113 to 116; it reads SLLP.

Belongs to the Fmt family.

It catalyses the reaction L-methionyl-tRNA(fMet) + (6R)-10-formyltetrahydrofolate = N-formyl-L-methionyl-tRNA(fMet) + (6S)-5,6,7,8-tetrahydrofolate + H(+). Its function is as follows. Attaches a formyl group to the free amino group of methionyl-tRNA(fMet). The formyl group appears to play a dual role in the initiator identity of N-formylmethionyl-tRNA by promoting its recognition by IF2 and preventing the misappropriation of this tRNA by the elongation apparatus. This chain is Methionyl-tRNA formyltransferase, found in Shigella boydii serotype 18 (strain CDC 3083-94 / BS512).